The primary structure comprises 363 residues: DNA replication and repair protein RecF (363 aa).

Glycine 30–serine 37 is a binding site for ATP.

Belongs to the RecF family.

The protein resides in the cytoplasm. Functionally, the RecF protein is involved in DNA metabolism; it is required for DNA replication and normal SOS inducibility. RecF binds preferentially to single-stranded, linear DNA. It also seems to bind ATP. This is DNA replication and repair protein RecF from Pseudoalteromonas atlantica (strain T6c / ATCC BAA-1087).